Reading from the N-terminus, the 108-residue chain is Tetrahydromethanopterin S-methyltransferase subunit B (108 aa).

Residues G79–V99 form a helical membrane-spanning segment.

The protein belongs to the MtrB family. As to quaternary structure, the complex is composed of 8 subunits; MtrA, MtrB, MtrC, MtrD, MtrE, MtrF, MtrG and MtrH.

It is found in the cell membrane. It carries out the reaction 5-methyl-5,6,7,8-tetrahydromethanopterin + coenzyme M + 2 Na(+)(in) = 5,6,7,8-tetrahydromethanopterin + methyl-coenzyme M + 2 Na(+)(out). Its pathway is one-carbon metabolism; methanogenesis from CO(2); methyl-coenzyme M from 5,10-methylene-5,6,7,8-tetrahydromethanopterin: step 2/2. Part of a complex that catalyzes the formation of methyl-coenzyme M and tetrahydromethanopterin from coenzyme M and methyl-tetrahydromethanopterin. This is an energy-conserving, sodium-ion translocating step. This Methanococcus maripaludis (strain C7 / ATCC BAA-1331) protein is Tetrahydromethanopterin S-methyltransferase subunit B.